The primary structure comprises 514 residues: Glycosyltransferase-like At3g57200 (514 aa).

The segment at 1 to 23 (MAGLYSSSSSSKPTLSSSPSSSS) is disordered. An N-terminal signal peptide occupies residues 1–39 (MAGLYSSSSSSKPTLSSSPSSSSSSRLFLLVTLLPLSLA). Residues N156, N187, N251, and N460 are each glycosylated (N-linked (GlcNAc...) asparagine). The tract at residues 457-514 (PSKNSSTADSTSGITRESSQETGKRRVLEFHLDVDGESQASAVPPQSPPGLEATQMEL) is disordered. Residues 458 to 473 (SKNSSTADSTSGITRE) show a composition bias toward polar residues. The segment covering 474–490 (SSQETGKRRVLEFHLDV) has biased composition (basic and acidic residues).

It belongs to the glycosyltransferase 25 family.

It localises to the secreted. It is found in the cell wall. The protein resides in the cytoplasm. The protein localises to the cell membrane. In terms of biological role, involved in the coordination between cell elongation and cellulose synthesis by promoting the expression of genes involved in cell elongation and cellulose synthesis. Acts as a regulator of plasmodesmatal permeability. Maybe a glycosyltransferase. In Arabidopsis thaliana (Mouse-ear cress), this protein is Glycosyltransferase-like At3g57200.